The chain runs to 516 residues: MAHQNQHQDTIDSTEVEVWDSRTAQEVNKSLYPPAVDSPFTLNTHLSAWRWACTIILGTVLVPVRVSCIVFLLILLWPVAVLSAINLPTQPTKPIRRWRKHLIKSALVFLFRLGFFFAGFLVKVKGKKATREEAPIFVSAPHSTFFDAIAVVVAGLPSVVSDSQLARVPLAGKCILVTQPVLVKREDPNSRKTTRNEILRRVKSKMKWPQILIFPEGLCTNRSCLVTFKLGAFSPGVPVQPVLLRYPNSLDTVTWTWNGFSGFQVCMLTLSQLFTRVEVEFMPVYIPSEEEKKDPILFANTVRIKMANALKLPVTDHSLEDCKLMISAGALQLPMEAGLVEFTKISQKLKLDWDNIHKHLDQYASFAVSSKGGKIGIEAFSRYLKLPISEPLRQLFSLFDRNQDGTIDFREYVIGLTVLCNPSNTEKILQMSFKLFDLDEDGYVTERELTTMLQAAFGVPDLDVSTLFQQMAGKDSDQVSYRTFRRFALKHPAYAKLFHSYIDLQAAYIYSLPREV.

N28 carries N-linked (GlcNAc...) asparagine glycosylation. The next 3 membrane-spanning stretches (helical) occupy residues 44 to 64 (THLSAWRWACTIILGTVLVPV), 68 to 88 (CIVFLLILLWPVAVLSAINLP), and 102 to 122 (LIKSALVFLFRLGFFFAGFLV). Positions 142-147 (HSTFFD) match the HXXXXD motif motif. 2 consecutive EF-hand domains span residues 387–422 (PISEPLRQLFSLFDRNQDGTIDFREYVIGLTVLCNP) and 424–459 (NTEKILQMSFKLFDLDEDGYVTERELTTMLQAAFGV). Ca(2+)-binding residues include D400, N402, D404, T406, E411, D437, D439, D441, Y443, and E448.

This sequence belongs to the 1-acyl-sn-glycerol-3-phosphate acyltransferase family.

Its subcellular location is the membrane. Its pathway is lipid metabolism; phospholipid metabolism. In terms of biological role, probable acetyltransferase. In Mus musculus (Mouse), this protein is Lysophosphatidylcholine acyltransferase 2B (Lpcat2b).